A 542-amino-acid polypeptide reads, in one-letter code: Chaperonin GroEL (542 aa).

Residues 29-32 (TLGP), 86-90 (DGTTT), G413, and D492 each bind ATP.

The protein belongs to the chaperonin (HSP60) family. In terms of assembly, forms a cylinder of 14 subunits composed of two heptameric rings stacked back-to-back. Interacts with the co-chaperonin GroES.

The protein resides in the cytoplasm. It carries out the reaction ATP + H2O + a folded polypeptide = ADP + phosphate + an unfolded polypeptide.. Together with its co-chaperonin GroES, plays an essential role in assisting protein folding. The GroEL-GroES system forms a nano-cage that allows encapsulation of the non-native substrate proteins and provides a physical environment optimized to promote and accelerate protein folding. The chain is Chaperonin GroEL from Nocardia asteroides.